Reading from the N-terminus, the 335-residue chain is NADH-quinone oxidoreductase subunit H (335 aa).

8 consecutive transmembrane segments (helical) span residues 11–31 (VILTVVKAIVILLAVVIAGAL), 81–101 (VIFTLAPVVAMSALLIAFAII), 114–134 (IGLLFFFAMAGLSVYAVLFAG), 154–174 (VSYEVFMGLALMGIVVQVGSF), 187–207 (LWFIIPQFFGFCTFFIAGVAV), 238–258 (FFVGEYIGIILISALLVTLFF), 270–290 (QLSFVWFALKTAFFIMLFILL), and 307–327 (WKFCLPLTLINLLITAAVVLW).

This sequence belongs to the complex I subunit 1 family. As to quaternary structure, NDH-1 is composed of 13 different subunits. Subunits NuoA, H, J, K, L, M, N constitute the membrane sector of the complex.

The protein localises to the cell inner membrane. The enzyme catalyses a quinone + NADH + 5 H(+)(in) = a quinol + NAD(+) + 4 H(+)(out). Its function is as follows. NDH-1 shuttles electrons from NADH, via FMN and iron-sulfur (Fe-S) centers, to quinones in the respiratory chain. The immediate electron acceptor for the enzyme in this species is believed to be ubiquinone. Couples the redox reaction to proton translocation (for every two electrons transferred, four hydrogen ions are translocated across the cytoplasmic membrane), and thus conserves the redox energy in a proton gradient. This subunit may bind ubiquinone. The protein is NADH-quinone oxidoreductase subunit H of Pseudomonas fluorescens (strain ATCC BAA-477 / NRRL B-23932 / Pf-5).